We begin with the raw amino-acid sequence, 155 residues long: DNA polymerase epsilon subunit 4 (155 aa).

Composition is skewed to acidic residues over residues 1–16 (MASEELFEAEFSEEQD) and 24–48 (ETEEAELAETEEPLEITEESPDNPE). The disordered stretch occupies residues 1–76 (MASEELFEAE…APADNEAKMT (76 aa)). Over residues 49 to 65 (AESTTEQLTEKPVTNGN) the composition is skewed to polar residues.

Component of the DNA polymerase epsilon complex consisting of four subunits: the catalytic subunit PolE1/DNApol-epsilon255 and the accessory subunits PolE2/DNApol-epsilon58, Chrac-14/DNApolE3 and PolE4/Mes4.

Its subcellular location is the nucleus. Its function is as follows. Accessory component of the DNA polymerase epsilon complex. Participates in DNA repair and in chromosomal DNA replication. Has a role in cell cycle progression. Required for wing morphogenesis. The protein is DNA polymerase epsilon subunit 4 of Drosophila melanogaster (Fruit fly).